Reading from the N-terminus, the 37-residue chain is MTAESMMFNGAVLLMVLVLVGLAWGFLLLKIQGGEAE.

A helical transmembrane segment spans residues 11 to 29; the sequence is AVLLMVLVLVGLAWGFLLL.

The protein belongs to the PetM family. As to quaternary structure, the 4 large subunits of the cytochrome b6-f complex are cytochrome b6, subunit IV (17 kDa polypeptide, PetD), cytochrome f and the Rieske protein, while the 4 small subunits are PetG, PetL, PetM and PetN. The complex functions as a dimer.

It localises to the cellular thylakoid membrane. In terms of biological role, component of the cytochrome b6-f complex, which mediates electron transfer between photosystem II (PSII) and photosystem I (PSI), cyclic electron flow around PSI, and state transitions. This is Cytochrome b6-f complex subunit 7 from Rippkaea orientalis (strain PCC 8801 / RF-1) (Cyanothece sp. (strain PCC 8801)).